Here is a 63-residue protein sequence, read N- to C-terminus: Sperm protamine P1 (63 aa).

The segment at 1–63 (MARYRRHSRS…RYSRRGRRRY (63 aa)) is disordered.

It belongs to the protamine P1 family. Testis.

The protein localises to the nucleus. The protein resides in the chromosome. Protamines substitute for histones in the chromatin of sperm during the haploid phase of spermatogenesis. They compact sperm DNA into a highly condensed, stable and inactive complex. This Pseudantechinus macdonnellensis (Fat-tailed marsupial mouse) protein is Sperm protamine P1 (PRM1).